The following is a 503-amino-acid chain: TGF-beta receptor type-1 (503 aa).

An N-terminal signal peptide occupies residues 1-29 (MEAAAAAPRRPQLLIVLVAAATLLPGAKA). The Extracellular portion of the chain corresponds to 30-126 (LQCFCHLCTK…QSAGLGPVEL (97 aa)). 5 cysteine pairs are disulfide-bonded: cysteine 32–cysteine 50, cysteine 34–cysteine 37, cysteine 44–cysteine 67, cysteine 82–cysteine 96, and cysteine 97–cysteine 102. Asparagine 41 is a glycosylation site (N-linked (GlcNAc...) asparagine). Residues 127 to 147 (AAVIAGPVCFVCIALMLMVYI) traverse the membrane as a helical segment. The Cytoplasmic portion of the chain corresponds to 148 to 503 (CHNRTVIHHR…QLSQQEGIKM (356 aa)). Residue serine 165 is modified to Phosphoserine. The GS domain occupies 175 to 204 (TTLKDLIYDMTTSGSGSGLPLLVQRTIART). Residues threonine 185 and threonine 186 each carry the phosphothreonine; by TGFBR2 modification. Residues serine 187, serine 189, and serine 191 each carry the phosphoserine; by TGFBR2 modification. An FKBP1A-binding motif is present at residues 193–194 (LP). The Protein kinase domain occupies 205 to 495 (IVLQESIGKG…LRIKKTLSQL (291 aa)). Residues 211-219 (IGKGRFGEV) and lysine 232 contribute to the ATP site. Residue lysine 268 forms a Glycyl lysine isopeptide (Lys-Gly) (interchain with G-Cter in ubiquitin) linkage. Aspartate 333 serves as the catalytic Proton acceptor. Residue lysine 391 forms a Glycyl lysine isopeptide (Lys-Gly) (interchain with G-Cter in SUMO) linkage.

Belongs to the protein kinase superfamily. TKL Ser/Thr protein kinase family. TGFB receptor subfamily. In terms of assembly, homodimer; in the endoplasmic reticulum but also at the cell membrane. Heterohexamer; TGFB1, TGFB2 and TGFB3 homodimeric ligands assemble a functional receptor composed of two TGFBR1 and TGFBR2 heterodimers to form a ligand-receptor heterohexamer. The respective affinity of TGBRB1 and TGFBR2 for the ligands may modulate the kinetics of assembly of the receptor and may explain the different biological activities of TGFB1, TGFB2 and TGFB3. Component of a complex composed of TSC22D1 (via N-terminus), TGFBR1 and TGFBR2; the interaction between TSC22D1 and TGFBR1 is inhibited by SMAD7 and promoted by TGFB1. Interacts with CD109; inhibits TGF-beta receptor activation in keratinocytes. Interacts with RBPMS. Interacts (unphosphorylated) with FKBP1A; prevents TGFBR1 phosphorylation by TGFBR2 and stabilizes it in the inactive conformation. Interacts with SMAD2, SMAD3 and ZFYVE9; ZFYVE9 recruits SMAD2 and SMAD3 to the TGF-beta receptor. Interacts with TRAF6 and MAP3K7; induces MAP3K7 activation by TRAF6. Interacts with PARD6A; involved in TGF-beta induced epithelial to mesenchymal transition. Interacts with NEDD4L. Interacts with SMAD7, SMURF1 and SMURF2; SMAD7 recruits NEDD4L, SMURF1 and SMURF2 to the TGF-beta receptor. Interacts with USP15 and VPS39. Interacts with SDCBP (via C-terminus). Interacts with CAV1 and this interaction is impaired in the presence of SDCBP. Interacts with APPL1; interaction is TGF beta dependent; mediates trafficking of the TGFBR1 from the endosomes to the nucleus via microtubules in a TRAF6-dependent manner. Interacts with GPR50; this interaction promotes the constitutive activation of SMAD signaling pathway. The cofactor is Mg(2+). Mn(2+) serves as cofactor. Phosphorylated at basal levels in the absence of ligand. Activated upon phosphorylation by TGFBR2, mainly in the GS domain. Phosphorylation in the GS domain abrogates FKBP1A-binding. Post-translationally, N-Glycosylated. In terms of processing, ubiquitinated; undergoes ubiquitination catalyzed by several E3 ubiquitin ligases including SMURF1, SMURF2 and NEDD4L2. Results in the proteasomal and/or lysosomal degradation of the receptor thereby negatively regulating its activity. Deubiquitinated by USP15, leading to stabilization of the protein and enhanced TGF-beta signal. Its ubiquitination and proteasome-mediated degradation is negatively regulated by SDCBP. Ubiquitinated by BFAR via'Lys-63'-linked ubiquitination at Lys-268, leading to TGF-beta signaling activation.

It is found in the cell membrane. The protein localises to the cell junction. It localises to the tight junction. Its subcellular location is the membrane raft. The protein resides in the cell surface. It catalyses the reaction L-threonyl-[receptor-protein] + ATP = O-phospho-L-threonyl-[receptor-protein] + ADP + H(+). The catalysed reaction is L-seryl-[receptor-protein] + ATP = O-phospho-L-seryl-[receptor-protein] + ADP + H(+). Its activity is regulated as follows. Kept in an inactive conformation by FKBP1A preventing receptor activation in absence of ligand. CD109 is another inhibitor of the receptor. Transmembrane serine/threonine kinase forming with the TGF-beta type II serine/threonine kinase receptor, TGFBR2, the non-promiscuous receptor for the TGF-beta cytokines TGFB1, TGFB2 and TGFB3. Transduces the TGFB1, TGFB2 and TGFB3 signal from the cell surface to the cytoplasm and is thus regulating a plethora of physiological and pathological processes including cell cycle arrest in epithelial and hematopoietic cells, control of mesenchymal cell proliferation and differentiation, wound healing, extracellular matrix production, immunosuppression and carcinogenesis. The formation of the receptor complex composed of 2 TGFBR1 and 2 TGFBR2 molecules symmetrically bound to the cytokine dimer results in the phosphorylation and the activation of TGFBR1 by the constitutively active TGFBR2. Activated TGFBR1 phosphorylates SMAD2 which dissociates from the receptor and interacts with SMAD4. The SMAD2-SMAD4 complex is subsequently translocated to the nucleus where it modulates the transcription of the TGF-beta-regulated genes. This constitutes the canonical SMAD-dependent TGF-beta signaling cascade. Also involved in non-canonical, SMAD-independent TGF-beta signaling pathways. For instance, TGFBR1 induces TRAF6 autoubiquitination which in turn results in MAP3K7 ubiquitination and activation to trigger apoptosis. Also regulates epithelial to mesenchymal transition through a SMAD-independent signaling pathway through PARD6A phosphorylation and activation. The chain is TGF-beta receptor type-1 (Tgfbr1) from Mus musculus (Mouse).